Consider the following 543-residue polypeptide: Protein DETOXIFICATION 47, chloroplastic (543 aa).

The N-terminal 30 residues, 1–30 (MLIKSQRLTLFSPLLSKTRRIPVNSHQTLV), are a transit peptide targeting the chloroplast. Residues 55 to 94 (VIRRRIKLERVTRNCVRIDREIDEEEEEEEKERGDLVKQS) adopt a coiled-coil conformation. Transmembrane regions (helical) follow at residues 107–127 (GPAMGMWICGPLMSLIDTVVI), 135–155 (LAALGPGTVLCDHMSYVFMFL), 181–201 (VLLFIGLVCGLMMLLLTRLFG), 228–248 (GLAWPFILVGLVAQSASLGMK), 256–276 (ALAAATIINGLGDTILCLFLG), 278–298 (GIAGAAWATTASQIVSAYMMM), 319–339 (LWKISALAAPVFISIFSKIAF), 342–362 (FIIYCATSMGTHVLAAHQVMA), 406–426 (IIGATLGLVLGVIGTAVPGLF), 443–463 (LLIPFFMALSALPMTVSLEGT), 472–492 (FVSSVMSSSFIIGCLTLMFVT), and 497–517 (GLLGCWFVLVGFQWGRFGLYL).

It belongs to the multi antimicrobial extrusion (MATE) (TC 2.A.66.1) family. As to expression, preferentially expressed in the epidermal cells.

The protein localises to the plastid. Its subcellular location is the chloroplast membrane. Its function is as follows. Functions as a multidrug and toxin extrusion transporter in the export of salicylic acid (SA) from the chloroplast to the cytoplasm. Plays an essential function in plant defense via the pathogen-induced salicylic acid (SA) accumulation. Also acts as a key component of the Age-related resistance (ARR) pathway. This Arabidopsis thaliana (Mouse-ear cress) protein is Protein DETOXIFICATION 47, chloroplastic.